A 258-amino-acid polypeptide reads, in one-letter code: NAD kinase (258 aa).

Asp-45 functions as the Proton acceptor in the catalytic mechanism. NAD(+)-binding positions include 45–46 (DG), 117–118 (NE), Asp-147, Ala-155, 158–163 (TAYNYS), and Ala-182.

The protein belongs to the NAD kinase family. Requires a divalent metal cation as cofactor.

It localises to the cytoplasm. It carries out the reaction NAD(+) + ATP = ADP + NADP(+) + H(+). Its function is as follows. Involved in the regulation of the intracellular balance of NAD and NADP, and is a key enzyme in the biosynthesis of NADP. Catalyzes specifically the phosphorylation on 2'-hydroxyl of the adenosine moiety of NAD to yield NADP. In Xanthomonas oryzae pv. oryzae (strain MAFF 311018), this protein is NAD kinase.